The sequence spans 1630 residues: Patronin (1630 aa).

The 133-residue stretch at 156–288 (QSYEQALLGW…LVVLLTDLFN (133 aa)) folds into the Calponin-homology (CH) domain. 2 disordered regions span residues 311 to 333 (NSFG…VQSN) and 355 to 446 (ASMH…DQLN). A compositionally biased stretch (polar residues) spans 319-333 (RRSTPPNEYQTVQSN). A Phosphothreonine modification is found at Thr322. Residues 358-394 (HSQQQQQLHQQQQHQQQYHQQPLQQHPSQSQLQIQQQ) are compositionally biased toward low complexity. The segment covering 404–419 (QAKEKTNVESKADERG) has biased composition (basic and acidic residues). Residues Ser422, Ser431, Ser441, Ser460, Ser463, and Ser466 each carry the phosphoserine modification. Over residues 432–446 (QLTIENFGGSQDQLN) the composition is skewed to polar residues. The tract at residues 486 to 589 (LQLGYDTDSG…SMPASPAAWQ (104 aa)) is disordered. Thr492 carries the phosphothreonine modification. 4 positions are modified to phosphoserine: Ser494, Ser496, Ser513, and Ser530. Positions 495 to 507 (GSEKQDRETEKYS) are enriched in basic and acidic residues. Positions 513 to 529 (SVDNVPTVSSHNLSNAG) are enriched in polar residues. A compositionally biased stretch (low complexity) spans 576-587 (SSTSSMPASPAA). The stretch at 601–639 (ENASKLSTIRMKLEEKRRRIEQDKRKIEMALLRHQEKED) forms a coiled coil. Disordered regions lie at residues 726–753 (VSAY…PMPM), 872–967 (QQHQ…GMPM), 1005–1042 (DFVH…YDSG), 1055–1186 (NLTY…NKYT), 1200–1241 (GAMS…NAEA), 1284–1315 (EAKA…EEQM), and 1335–1459 (EREG…GVER). 2 stretches are compositionally biased toward low complexity: residues 738–750 (PYQQ…QQQP) and 872–896 (QQHQ…SPGS). A compositionally biased stretch (gly residues) spans 902-914 (NGGGGGGGGGGGE). Positions 919–947 (FQVQASPQHGQRQVSGSNGVQRQQSLTNL) are enriched in polar residues. Low complexity-rich tracts occupy residues 956–967 (PQNMGMPMGMPM) and 1008–1036 (HQQQ…GSSS). Residues Ser1034, Ser1035, Ser1036, and Ser1067 each carry the phosphoserine modification. A compositionally biased stretch (polar residues) spans 1065–1074 (RPSIQANSFQ). Residues 1105 to 1116 (RPKPPLRAKRSP) are compositionally biased toward basic residues. Residues 1167–1184 (GLNNSNSVKSPGNATYNK) show a composition bias toward polar residues. Low complexity predominate over residues 1218-1230 (QSPQQTQQPMSPT). A phosphoserine mark is found at Ser1219 and Ser1228. Positions 1277–1343 (QRRQQQEEAK…AEREGKTLDR (67 aa)) form a coiled coil. Residues 1335–1348 (EREGKTLDRPDLHV) show a composition bias toward basic and acidic residues. Residues 1363–1374 (RQQRTTRPRPKT) show a composition bias toward basic residues. Residues 1382–1400 (VDISEASSISSRGKKGSSS) show a composition bias toward low complexity. 3 positions are modified to phosphoserine: Ser1398, Ser1399, and Ser1400. Over residues 1401–1412 (NLTGYGQLSSNS) the composition is skewed to polar residues. The span at 1450-1459 (TSREPAGVER) shows a compositional bias: basic and acidic residues. The CKK domain maps to 1489–1623 (GPKLYKQPAA…QGKRVQLPSK (135 aa)).

This sequence belongs to the CAMSAP1 family. Interacts with msps. Associates with the minus end of the microtubules.

It localises to the cytoplasm. The protein resides in the cytoskeleton. Its subcellular location is the microtubule organizing center. The protein localises to the spindle pole body. It is found in the centrosome. It localises to the perinuclear region. Its function is as follows. Key microtubule-organizing protein that specifically binds the minus-end of microtubules and regulates their dynamics and organization. Involved in mitotic spindle assembly. Regulates microtubule (MT) severing. Antagonizes the activity of the kinesin-13 depolymerase Klp10A thereby switching off the depolymerization of the MTs at their pole-associated minus ends, which turns off poleward flux and induces anaphase B spindle elongation. Involved in asymmetric cell division of sensory organ precursor (SOP) cells by playing a role in the asymmetric localization of Sara-expressing endosomes to the pIIa daughter cell but not to the pIIb cell. Klp98A targets Sara-expressing endosomes to the central spindle which is symmetrically arranged in early cell division. During late cytokinesis, central spindle asymmetry is generated by enrichment of Patronin on the pIIb side which protects microtubules from depolymerization by Klp10A while unprotected microtubules on the pIIa side are disassembled by Klp10A, leading to the asymmetric delivery of Sara-expressing endosomes to the pIIa daughter cell. In fat body cells, part of perinuclear non-centrosomal microtubule-organizing centers (ncMTOCs) which function to accommodate the organization of microtubule (MT) networks to control nuclear positioning and dynein motor-based retrograde endosomal trafficking. Within the ncMTOC, Msp300 and shot anchors the ncMTOC at the nuclear surface and recruits the MT minus-end regulators Patronin and Nin for assembly, anchoring and/or stabilization of circumferential and radial MTs at the ncMTOCs. This protein, and perhaps Nin, recruits msps to the ncMTOC for the gamma-tubulin-independent elongation of radial MTs. The polypeptide is Patronin (Patronin) (Drosophila melanogaster (Fruit fly)).